A 1218-amino-acid chain; its full sequence is Coatomer subunit alpha-2 (1218 aa).

WD repeat units lie at residues Thr-7–Asp-48, Glu-49–Thr-88, Gly-91–Thr-132, Gly-133–Val-172, Gly-202–Val-241, Gly-246–Thr-285, Arg-288–Ser-326, and Ser-363–Ala-404. The interval Met-855–Glu-876 is disordered. A compositionally biased stretch (acidic residues) spans Phe-862 to Glu-876.

In terms of assembly, oligomeric complex that consists of at least the alpha, beta, beta', gamma, delta, epsilon and zeta subunits.

Its subcellular location is the cytoplasm. It is found in the golgi apparatus membrane. The protein localises to the cytoplasmic vesicle. It localises to the COPI-coated vesicle membrane. The coatomer is a cytosolic protein complex that binds to dilysine motifs and reversibly associates with Golgi non-clathrin-coated vesicles, which further mediate biosynthetic protein transport from the ER, via the Golgi up to the trans Golgi network. Coatomer complex is required for budding from Golgi membranes, and is essential for the retrograde Golgi-to-ER transport of dilysine-tagged proteins. The protein is Coatomer subunit alpha-2 of Oryza sativa subsp. japonica (Rice).